Consider the following 465-residue polypeptide: Flavin-containing monooxygenase FMO GS-OX-like 2 (465 aa).

Gly18–Gly23 is an FAD binding site. Position 217 to 222 (Gly217 to Gly222) interacts with NADP(+).

The protein belongs to the FMO family. The cofactor is FAD.

In terms of biological role, catalyzes the conversion of methylthioalkyl glucosinolates of any chain length into methylsulfinylalkyl glucosinolates. The sequence is that of Flavin-containing monooxygenase FMO GS-OX-like 2 from Arabidopsis thaliana (Mouse-ear cress).